The chain runs to 173 residues: Aliphatic sulfonate oxidoreductase, polyferredoxin-like subunit (173 aa).

4Fe-4S ferredoxin-type domains follow at residues 9–40, 48–80, and 82–111; these read IWIL…WPEA, LFPG…VDEK, and GAVV…IPAG. 16 residues coordinate [4Fe-4S] cluster: cysteine 18, cysteine 21, cysteine 24, cysteine 28, cysteine 58, cysteine 61, cysteine 66, cysteine 70, cysteine 91, cysteine 94, cysteine 97, cysteine 101, cysteine 118, cysteine 121, cysteine 127, and cysteine 131.

Heterodimer composed of a small WOR5-S subunit, with four [4Fe-4S] clusters, and a large WOR5-L subunit, containing the active site tungsto-bispyranopterin cofactor as well as another [4Fe-4S] cluster. The cofactor is [4Fe-4S] cluster.

It localises to the cytoplasm. Polyferredoxin-like subunit of an oxidoreductase that can desulfonate and oxidize aliphatic sulfonates such as taurine. May serve as a an electron-transfer subunit between the catalytic subunit and ferredoxin. The sequence is that of Aliphatic sulfonate oxidoreductase, polyferredoxin-like subunit from Pyrococcus furiosus (strain ATCC 43587 / DSM 3638 / JCM 8422 / Vc1).